The sequence spans 252 residues: GTP cyclohydrolase 1 type 2 homolog (252 aa).

A divalent metal cation-binding residues include H65, H66, D103, H220, and E224.

It belongs to the GTP cyclohydrolase I type 2/NIF3 family. In terms of assembly, homohexamer.

This chain is GTP cyclohydrolase 1 type 2 homolog, found in Pseudomonas aeruginosa (strain ATCC 15692 / DSM 22644 / CIP 104116 / JCM 14847 / LMG 12228 / 1C / PRS 101 / PAO1).